Here is a 577-residue protein sequence, read N- to C-terminus: Acyl-coenzyme A synthetase ACSM2A, mitochondrial (577 aa).

A mitochondrion-targeting transit peptide spans 1-46 (MHWLRKVQGLCTLWGTQMSSRTLYINSRQLVSLQWGHQEVPAKFNF). Glutamine 139 serves as a coordination point for CoA. ATP is bound by residues 221 to 229 (TSGTSGLPK), 359 to 364 (ESYGQT), aspartate 446, and arginine 461. Threonine 364 serves as a coordination point for substrate. Residue 469 to 471 (SGY) coordinates CoA. Arginine 472 is a substrate binding site. Position 501 (arginine 501) interacts with CoA. At serine 513 the chain carries Phosphoserine. CoA is bound by residues lysine 532 and 540–542 (YPR). Lysine 557 serves as a coordination point for ATP.

The protein belongs to the ATP-dependent AMP-binding enzyme family. As to quaternary structure, monomer. It depends on Mg(2+) as a cofactor. The cofactor is Mn(2+).

The protein localises to the mitochondrion. The catalysed reaction is a medium-chain fatty acid + ATP + CoA = a medium-chain fatty acyl-CoA + AMP + diphosphate. It carries out the reaction benzoate + ATP + CoA = benzoyl-CoA + AMP + diphosphate. It catalyses the reaction hexanoate + ATP + CoA = hexanoyl-CoA + AMP + diphosphate. The enzyme catalyses butanoate + ATP + CoA = butanoyl-CoA + AMP + diphosphate. The catalysed reaction is octanoate + ATP + CoA = octanoyl-CoA + AMP + diphosphate. It carries out the reaction decanoate + ATP + CoA = decanoyl-CoA + AMP + diphosphate. Functionally, catalyzes the activation of fatty acids by CoA to produce an acyl-CoA, the first step in fatty acid metabolism. Capable of activating medium-chain fatty acids (e.g. butyric (C4) to decanoic (C10) acids), and certain carboxylate-containing xenobiotics, e.g. benzoate. In Homo sapiens (Human), this protein is Acyl-coenzyme A synthetase ACSM2A, mitochondrial (ACSM2A).